The primary structure comprises 195 residues: Imidazoleglycerol-phosphate dehydratase (195 aa).

It belongs to the imidazoleglycerol-phosphate dehydratase family.

It is found in the cytoplasm. The enzyme catalyses D-erythro-1-(imidazol-4-yl)glycerol 3-phosphate = 3-(imidazol-4-yl)-2-oxopropyl phosphate + H2O. The protein operates within amino-acid biosynthesis; L-histidine biosynthesis; L-histidine from 5-phospho-alpha-D-ribose 1-diphosphate: step 6/9. The protein is Imidazoleglycerol-phosphate dehydratase of Bordetella bronchiseptica (strain ATCC BAA-588 / NCTC 13252 / RB50) (Alcaligenes bronchisepticus).